A 202-amino-acid chain; its full sequence is GTP cyclohydrolase 1 (202 aa).

Zn(2+)-binding residues include C90, H93, and C163.

The protein belongs to the GTP cyclohydrolase I family. Homomer.

The enzyme catalyses GTP + H2O = 7,8-dihydroneopterin 3'-triphosphate + formate + H(+). The protein operates within cofactor biosynthesis; 7,8-dihydroneopterin triphosphate biosynthesis; 7,8-dihydroneopterin triphosphate from GTP: step 1/1. The sequence is that of GTP cyclohydrolase 1 from Mycobacterium marinum (strain ATCC BAA-535 / M).